A 419-amino-acid polypeptide reads, in one-letter code: Transcription termination factor Rho (419 aa).

The 76-residue stretch at 48–123 folds into the Rho RNA-BD domain; the sequence is DIFGDGVLEI…LKVNEVNFDK (76 aa). 3 RNA-binding regions span residues 61 to 66, 78 to 80, and 108 to 110; these read GFGFLR, DIY, and ERY. Residues 169–174, 181–186, and Arg-212 contribute to the ATP site; these read GRGQRG and KAGKTM. An RNA-binding 2 region spans residues 284–288; it reads VLTGG.

The protein belongs to the Rho family. As to quaternary structure, homohexamer. The homohexamer assembles into an open ring structure.

Functionally, facilitates transcription termination by a mechanism that involves Rho binding to the nascent RNA, activation of Rho's RNA-dependent ATPase activity, and release of the mRNA from the DNA template. The chain is Transcription termination factor Rho from Escherichia coli O157:H7.